A 347-amino-acid polypeptide reads, in one-letter code: Farnesyl pyrophosphate synthase (347 aa).

Positions 50, 53, and 88 each coordinate isopentenyl diphosphate. Positions 95 and 99 each coordinate Mg(2+). Arg-104 contributes to the dimethylallyl diphosphate binding site. Residue Arg-105 coordinates isopentenyl diphosphate. 5 residues coordinate dimethylallyl diphosphate: Lys-192, Thr-193, Gln-232, Lys-249, and Lys-258.

It belongs to the FPP/GGPP synthase family. In terms of assembly, interacts with spo9. Mg(2+) serves as cofactor.

It is found in the cytoplasm. Its subcellular location is the nucleus. It carries out the reaction isopentenyl diphosphate + dimethylallyl diphosphate = (2E)-geranyl diphosphate + diphosphate. The enzyme catalyses isopentenyl diphosphate + (2E)-geranyl diphosphate = (2E,6E)-farnesyl diphosphate + diphosphate. The protein operates within isoprenoid biosynthesis; farnesyl diphosphate biosynthesis; farnesyl diphosphate from geranyl diphosphate and isopentenyl diphosphate: step 1/1. It participates in isoprenoid biosynthesis; geranyl diphosphate biosynthesis; geranyl diphosphate from dimethylallyl diphosphate and isopentenyl diphosphate: step 1/1. In terms of biological role, farnesyl pyrophosphate synthase; part of the second module of ergosterol biosynthesis pathway that includes the middle steps of the pathway. Fps1 catalyzes the sequential condensation of isopentenyl pyrophosphate with dimethylallyl pyrophosphate, and then with the resultant geranylpyrophosphate to the ultimate product farnesyl pyrophosphate. The second module is carried out in the vacuole and involves the formation of farnesyl diphosphate, which is also an important intermediate in the biosynthesis of ubiquinone, dolichol, heme and prenylated proteins. Activity by the mevalonate kinase erg12 first converts mevalonate into 5-phosphomevalonate. 5-phosphomevalonate is then further converted to 5-diphosphomevalonate by the phosphomevalonate kinase erg8. The diphosphomevalonate decarboxylase mvd1 then produces isopentenyl diphosphate. The isopentenyl-diphosphate delta-isomerase idi1 then catalyzes the 1,3-allylic rearrangement of the homoallylic substrate isopentenyl (IPP) to its highly electrophilic allylic isomer, dimethylallyl diphosphate (DMAPP). Finally the farnesyl diphosphate synthase fps1 catalyzes the sequential condensation of isopentenyl pyrophosphate with dimethylallyl pyrophosphate, and then with the resultant geranylpyrophosphate to the ultimate product farnesyl pyrophosphate. This Schizosaccharomyces pombe (strain 972 / ATCC 24843) (Fission yeast) protein is Farnesyl pyrophosphate synthase.